A 323-amino-acid polypeptide reads, in one-letter code: DNA repair and recombination protein RadA (323 aa).

Gly115–Thr122 lines the ATP pocket.

Belongs to the eukaryotic RecA-like protein family.

Functionally, involved in DNA repair and in homologous recombination. Binds and assemble on single-stranded DNA to form a nucleoprotein filament. Hydrolyzes ATP in a ssDNA-dependent manner and promotes DNA strand exchange between homologous DNA molecules. The protein is DNA repair and recombination protein RadA of Thermoplasma volcanium (strain ATCC 51530 / DSM 4299 / JCM 9571 / NBRC 15438 / GSS1).